The primary structure comprises 861 residues: MSSPAVETKVPASPDVTAEVIPAPPSSHRPLPFGLRPGKLVIVGSGIGSIGQFTLSAVAHIEQADRVFFVVADPATEAFIYSKNKNSVDLYKFYDDKKPRMDTYIQMAEVMLRELRKGYSVVGVIYGHPGVFVTPSHRAISIARDEGYSAKMLPGVSAEDNLFADIGIDPSRPGCLTYEATDLLLRNRTLVPSSHLVLFQVGCIGLSDFRFKGFDNINFDVLLDRLEQVYGPDHAVIHYMAAVLPQSTTTIDRYTIKELRDPVIKKRITAISTFYLPPKALSPLHEESAAKLGLMKAGYKILDGAQAPYPPFPWAGPNVPIGIAYGRRELAAVAKLDSHVPPANYKPLRASNAMKSTMIKLATDPKAFAQYSRNPALLANSTPGLTTPERKALQTGSQGLVRSVMKTSPEDVAKQFVQAELRDPTLAKQYSQECYDQTGNTDGIAVISAWLKSKGYDTTPTAINDAWADMQANSLDVYQSTYNTMVDGKSGPAITIKSGVVYIGNTVVKKFAFSKSVLTWSSTDGNPSSATLSFVVLTDDDGQPLPANSYIGPQFTGFYWTSGAKPAAANTLGRNGAFPSGGGGGSGGGGGSSSQGADISTWVDSYQTYVVTTAGSWKDEDILKIDDDTAHTITYGPLKIVKYSLSNDTVSWSATDGNPFNAVIFFKVNKPTKANPTAGNQFVGKKWLPSDPAPAAVNWTGLIGSTADPKGTAAANATASMWKSIGINLGVAVSAMVLGTAVIKAIGAAWDKGSAAWKAAKAAADKAKKDAEAAEKDSAVDDEKFADEEPPDLEELPIPDADPLVDVTDVDVTDVDVTDVDVTDVDVTDVDVTDVDVTDVDVTDVDVTDVDVVDVLDVVVI.

A methyltransferase domain region spans residues 1-279 (MSSPAVETKV…AISTFYLPPK (279 aa)). Residues arginine 100, tyrosine 104, and tyrosine 126 contribute to the active site. S-adenosyl-L-methionine-binding residues include tyrosine 126, histidine 128, valine 131, alanine 158, glutamine 200, alanine 241, serine 272, and threonine 273. Residues 280–408 (ALSPLHEESA…GLVRSVMKTS (129 aa)) are clasp domain. The type III-specific C-terminal domain stretch occupies residues 409-799 (PEDVAKQFVQ…PPDLEELPIP (391 aa)). Disordered stretches follow at residues 575 to 596 (NGAFPSGGGGGSGGGGGSSSQG) and 772 to 801 (EAAEKDSAVDDEKFADEEPPDLEELPIPDA). A compositionally biased stretch (gly residues) spans 579–593 (PSGGGGGSGGGGGSS). Residues 772-783 (EAAEKDSAVDDE) are compositionally biased toward basic and acidic residues. Positions 784–797 (KFADEEPPDLEELP) are enriched in acidic residues. Residues valine 805 and valine 807 each carry the N-methylvaline modification. 9 tandem repeats follow at residues 805-809 (VDVTD), 810-814 (VDVTD), 815-819 (VDVTD), 820-824 (VDVTD), 825-829 (VDVTD), 830-834 (VDVTD), 835-839 (VDVTD), 840-844 (VDVTD), and 845-849 (VDVTD). A 10 X 5 AA tandem repeats of VDVTD region spans residues 805–854 (VDVTDVDVTDVDVTDVDVTDVDVTDVDVTDVDVTDVDVTDVDVTDVDVVD). Threonine 808 carries the post-translational modification N-methylthreonine. N-methylvaline is present on residues valine 810 and valine 812. At threonine 813 the chain carries N-methylthreonine. 2 positions are modified to N-methylvaline: valine 815 and valine 817. Threonine 818 bears the N-methylthreonine mark. Residues valine 820 and valine 822 each carry the N-methylvaline modification. Position 823 is an N-methylthreonine (threonine 823). An N-methylvaline mark is found at valine 825 and valine 827. At threonine 828 the chain carries N-methylthreonine. An N-methylvaline mark is found at valine 830 and valine 832. The residue at position 833 (threonine 833) is an N-methylthreonine. A 10; approximate repeat occupies 850–854 (VDVVD).

This sequence in the N-terminal section; belongs to the precorrin methyltransferase family. AboMA automethylates at Val-805, Val-807, Thr-808, Val-810, Val-812, Thr-813, Val-815, Val-817, Thr-818, Val-820, Val-822, Thr-823, Val-825, Val-827 and Thr-828, Val-830, Val-832 and T-833 before being processed by a prolyloligopeptidase which likely forms a peptidyl ester upon removal of the follower propeptide, which then undergoes macrocyclization with the N-terminus of the modified core peptide. Peptide backbone alpha-N-methylations change the physicochemical properties of amide bonds to provide structural constraints and other favorable characteristics including biological membrane permeability to peptides.

It participates in secondary metabolite biosynthesis. Its function is as follows. Fusion protein of the methyltransferase aboM and a type III borosin core peptide; part of the gene cluster that mediates the biosynthesis of a type III borosin, a highly methylated cyclic peptide with potent biological activities. Type III borosins derive from the C-terminus of the fusion protein, and it is the same protein that methylates its own C-terminus using S-adenosyl methionine (SAM). The C-terminus is subsequently cleaved off and macrocyclized by a prolyloligopeptidase to give the final product. This is Methyltransferase/ribosomally synthesized type III borosin cyclic peptide precursor aboMAa from Anomoporia bombycina (Polyporus bombycinus).